Reading from the N-terminus, the 235-residue chain is Uridylate kinase (235 aa).

ATP is bound at residue 9–12; sequence KISG. G50 serves as a coordination point for UMP. The ATP site is built by G51 and R55. UMP contacts are provided by residues D70 and 131-138; that span reads TGFPYFTT. Residues N159, Y165, and D168 each coordinate ATP.

The protein belongs to the UMP kinase family. In terms of assembly, homohexamer; trimer of dimers.

The protein localises to the cytoplasm. It catalyses the reaction UMP + ATP = UDP + ADP. It participates in pyrimidine metabolism; CTP biosynthesis via de novo pathway; UDP from UMP (UMPK route): step 1/1. With respect to regulation, unlike other bacteria, is not activated by GTP. UTP is a competitive inhibitor against UMP and a non-competitive inhibitor toward ATP. Its function is as follows. Catalyzes the reversible phosphorylation of UMP to UDP, with ATP as the most efficient phosphate donor. Is also able to phosphorylate dUMP. In Ureaplasma parvum serovar 3 (strain ATCC 700970), this protein is Uridylate kinase (pyrH).